The primary structure comprises 413 residues: Cardiolipin synthase B (413 aa).

2 PLD phosphodiesterase domains span residues 108–135 and 285–312; these read IFRRMHRKIVVIDDRIAFVGGINYSAEH and RRRPLHGKVALMDDHWATVGSSNLDPLS. Residues H113, K115, D120, H290, K292, and D297 contribute to the active site. Residues 388–413 form a disordered region; the sequence is AQVPPPAQPEMETQDRVDPENSGVKP.

This sequence belongs to the phospholipase D family. Cardiolipin synthase subfamily. ClsB sub-subfamily.

Its subcellular location is the cell membrane. The catalysed reaction is 2 a 1,2-diacyl-sn-glycero-3-phospho-(1'-sn-glycerol) = a cardiolipin + glycerol. In terms of biological role, catalyzes the phosphatidyl group transfer from one phosphatidylglycerol molecule to another to form cardiolipin (CL) (diphosphatidylglycerol) and glycerol. The polypeptide is Cardiolipin synthase B (Salmonella typhi).